The sequence spans 49 residues: QLINGQGAPAPYPDPLEPKREVCELNPDCDELADQVGLQDAYQRFYGPV.

Residue Gln-1 is modified to Pyrrolidone carboxylic acid. The Gla domain occupies 1-47; sequence QLINGQGAPAPYPDPLEPKREVCELNPDCDELADQVGLQDAYQRFYG. Pro-9 is subject to 4-hydroxyproline. Ca(2+)-binding residues include Glu-17, Glu-21, Glu-24, and Asp-30. Residues Glu-17, Glu-21, and Glu-24 each carry the 4-carboxyglutamate modification. The cysteines at positions 23 and 29 are disulfide-linked.

Belongs to the osteocalcin/matrix Gla protein family. Post-translationally, gamma-carboxyglutamate residues are formed by vitamin K dependent carboxylation by GGCX. These residues are essential for the binding of calcium. Decarboxylation promotes the hormone activity.

Its subcellular location is the secreted. Functionally, the carboxylated form is one of the main organic components of the bone matrix, which constitutes 1-2% of the total bone protein: it acts as a negative regulator of bone formation and is required to limit bone formation without impairing bone resorption or mineralization. The carboxylated form binds strongly to apatite and calcium. Its function is as follows. The uncarboxylated form acts as a hormone secreted by osteoblasts, which regulates different cellular processes, such as energy metabolism, male fertility and brain development. Regulates of energy metabolism by acting as a hormone favoring pancreatic beta-cell proliferation, insulin secretion and sensitivity and energy expenditure. Uncarboxylated osteocalcin hormone also promotes testosterone production in the testes: acts as a ligand for G protein-coupled receptor GPRC6A at the surface of Leydig cells, initiating a signaling response that promotes the expression of enzymes required for testosterone synthesis in a CREB-dependent manner. Also acts as a regulator of brain development: osteocalcin hormone crosses the blood-brain barrier and acts as a ligand for GPR158 on neurons, initiating a signaling response that prevents neuronal apoptosis in the hippocampus, favors the synthesis of all monoamine neurotransmitters and inhibits that of gamma-aminobutyric acid (GABA). Osteocalcin also crosses the placenta during pregnancy and maternal osteocalcin is required for fetal brain development. The protein is Osteocalcin (BGLAP) of Oryctolagus cuniculus (Rabbit).